The chain runs to 713 residues: TWiK family of potassium channels protein 12 (713 aa).

Topologically, residues 1 to 15 (MTLFKKIQWFCNLIR) are cytoplasmic. A helical membrane pass occupies residues 16 to 36 (LRSYYKFLLLIAYTAFGAWLF). 3 N-linked (GlcNAc...) asparagine glycosylation sites follow: N53, N77, and N98. The pore-forming intramembrane region spans 112 to 132 (WTWTGAMFYAGQLYTTIGYGY). The helical transmembrane segment at 142 to 162 (ICTIFYALFGIPCFLMYLKIE) threads the bilayer. Residues 163 to 242 (NAIEWKKDKQ…AEERKKKPFP (80 aa)) are Cytoplasmic-facing. The helical transmembrane segment at 243–263 (IPIAIIMLIIWICFSASMFCI) threads the bilayer. Residues 267 to 287 (TWVFSSAVYFFIVSISTVGLG) constitute an intramembrane region (pore-forming). A helical membrane pass occupies residues 298-318 (VFNFLLILVGLALLSMCFELI). The Cytoplasmic portion of the chain corresponds to 319 to 713 (TDRVAKWKQK…LSKRDASTMA (395 aa)).

It belongs to the two pore domain potassium channel (TC 1.A.1.8) family.

It localises to the membrane. This chain is TWiK family of potassium channels protein 12 (twk-12), found in Caenorhabditis elegans.